A 269-amino-acid chain; its full sequence is Regulatory protein RecX (269 aa).

This sequence belongs to the RecX family.

It localises to the cytoplasm. Functionally, modulates RecA activity. The protein is Regulatory protein RecX of Lactococcus lactis subsp. cremoris (strain MG1363).